Consider the following 761-residue polypeptide: MMMWQRYARGAPRSLTSLSFGKASRISTVKPVLRSRMPVHQRLQTLSGLATRNTIHRSTQIRSFHISWTRLNENRPNKEGEGKNNGNKDNNSNKEDGKDKRNEFGSLSEYFRSKEFANTMFLTIGFTIIFTLLTPSSNNSGDDSNRVLTFQDFKTKYLEKGLVSKIYVVNKFLVEAELVNTKQVVSFTIGSVDIFEEQMDQIQDLLNIPPRDRIPIKYIERSSPFTFLFPFLPTIILLGGLYFITRKINSSPPNANGGGGGGLGGMFNVGKSRAKLFNKETDIKISFKNVAGCDEAKQEIMEFVHFLKNPGKYTKLGAKIPRGAILSGPPGTGKTLLAKATAGEANVPFLSVSGSEFVEMFVGVGASRVRDLFTQARSMAPSIIFIDEIDAIGKERGKGGALGGANDEREATLNQLLVEMDGFTTSDQVVVLAGTNRPDVLDNALMRPGRFDRHIQIDSPDVNGRQQIYLVHLKRLNLDPLLTDDMNNLSGKLATLTPGFTGADIANACNEAALIAARHNDPYITIHHFEQAIERVIAGLEKKTRVLSKEEKRSVAYHEAGHAVCGWFLKYADPLLKVSIIPRGQGALGYAQYLPPDQYLISEEQFRHRMIMALGGRVSEELHFPSVTSGAHDDFKKVTQMANAMVTSLGMSPKIGYLSFDQNDGNFKVNKPFSNKTARTIDLEVKSIVDDAHRACTELLTKNLDKVDLVAKELLRKEAITREDMIRLLGPRPFKERNEAFEKYLDPKSNTEPPEAPAATN.

Topologically, residues 1–115 (MMMWQRYARG…SLSEYFRSKE (115 aa)) are mitochondrial matrix. The segment at 67-101 (SWTRLNENRPNKEGEGKNNGNKDNNSNKEDGKDKR) is disordered. Composition is skewed to basic and acidic residues over residues 72-82 (NENRPNKEGEG) and 91-101 (NSNKEDGKDKR). Residues 116 to 136 (FANTMFLTIGFTIIFTLLTPS) form a helical membrane-spanning segment. Over 137-223 (SNNSGDDSNR…IPIKYIERSS (87 aa)) the chain is Mitochondrial intermembrane. The helical transmembrane segment at 224–244 (PFTFLFPFLPTIILLGGLYFI) threads the bilayer. Residues 245–761 (TRKINSSPPN…EPPEAPAATN (517 aa)) lie on the Mitochondrial matrix side of the membrane. ATP is bound by residues Val-290, Ala-291, Thr-332, Gly-333, Lys-334, Thr-335, Leu-336, and His-472. His-558 contributes to the Zn(2+) binding site. Glu-559 is a catalytic residue. Positions 562 and 634 each coordinate Zn(2+).

This sequence in the N-terminal section; belongs to the AAA ATPase family. It in the C-terminal section; belongs to the peptidase M41 family. Component of the 850 kDa m-AAA protease complex, a heterohexamer composed of YTA12/RCA1 and YTA10/AFG3. Associates with the prohibitin complex, composed of PHB1 and PHB2, inhibiting the activity of the m-AAA protease complex. Requires Zn(2+) as cofactor.

It is found in the mitochondrion inner membrane. It carries out the reaction ATP + H2O = ADP + phosphate + H(+). ATP hydrolysis is coordinated within m-AAA protease ring complexes: ATP-binding to YTA10/AFG3 inhibits ATP hydrolysis by the neighboring subunit YTA12/RCA1, leading to coordinated ATP hydrolysis within the AAA ATPase ring. Its function is as follows. Catalytic component of the m-AAA protease, a protease that plays a key role in proteostasis of inner mitochondrial membrane proteins. YTA10/AFG3 possesses both ATPase and protease activities: the ATPase activity is required to unfold substrates, threading them into the internal proteolytic cavity for hydrolysis into small peptide fragments. The complex is necessary for the assembly of mitochondrial respiratory chain and ATPase complexes. The m-AAA protease carries out protein quality control in the inner membrane of the mitochondria by mediating degradation of mistranslated or misfolded polypeptides. It also mediates protein maturation of the mitochondrial ribosomal subunit MRPL32/bL32m by catalyzing the cleavage of the presequence of MRPL32/bL32m prior to assembly into the mitochondrial ribosome. Promotes maturation of cytochrome c peroxidase (CCP1) by acting as a membrane protein dislocase via its ATPase activity: pulls the CCP1 transmembrane to the matrix prior to processing by the rhomboid protease PCP1. The membrane protein dislocase activity is also required to dislocate moderately hydrophobic transmembrane segments from the membrane. This chain is Mitochondrial inner membrane m-AAA protease component YTA10, found in Saccharomyces cerevisiae (strain ATCC 204508 / S288c) (Baker's yeast).